The following is a 235-amino-acid chain: Ubiquinone/menaquinone biosynthesis C-methyltransferase UbiE (235 aa).

S-adenosyl-L-methionine-binding residues include Thr-60 and Asp-81.

The protein belongs to the class I-like SAM-binding methyltransferase superfamily. MenG/UbiE family.

It carries out the reaction a 2-demethylmenaquinol + S-adenosyl-L-methionine = a menaquinol + S-adenosyl-L-homocysteine + H(+). The catalysed reaction is a 2-methoxy-6-(all-trans-polyprenyl)benzene-1,4-diol + S-adenosyl-L-methionine = a 5-methoxy-2-methyl-3-(all-trans-polyprenyl)benzene-1,4-diol + S-adenosyl-L-homocysteine + H(+). Its pathway is quinol/quinone metabolism; menaquinone biosynthesis; menaquinol from 1,4-dihydroxy-2-naphthoate: step 2/2. The protein operates within cofactor biosynthesis; ubiquinone biosynthesis. Functionally, methyltransferase required for the conversion of demethylmenaquinol (DMKH2) to menaquinol (MKH2) and the conversion of 2-polyprenyl-6-methoxy-1,4-benzoquinol (DDMQH2) to 2-polyprenyl-3-methyl-6-methoxy-1,4-benzoquinol (DMQH2). This chain is Ubiquinone/menaquinone biosynthesis C-methyltransferase UbiE, found in Geotalea uraniireducens (strain Rf4) (Geobacter uraniireducens).